A 533-amino-acid polypeptide reads, in one-letter code: Calcium-dependent protein kinase 19 (533 aa).

2 stretches are compositionally biased toward polar residues: residues 1–12 (MGSCCSRATSPD) and 24–38 (SHQTKPAQTTPSYNH). Positions 1-53 (MGSCCSRATSPDSGRGGANGYGYSHQTKPAQTTPSYNHPQPPPPAEVRYTPSA) are disordered. G2 carries the N-myristoyl glycine lipid modification. A Protein kinase domain is found at 85–343 (YSLGKELGRG…SAQVLQHPWL (259 aa)). ATP is bound by residues 91-99 (LGRGQFGVT) and K114. D209 (proton acceptor) is an active-site residue. Residues 348 to 378 (ASDKPIDSAVLSRMKQFRAMNKLKKMALKVI) are autoinhibitory domain. EF-hand domains follow at residues 385 to 420 (EEIKGLKQMFTNMDTDNSGTITYEELKAGLAKLGSK), 421 to 456 (LSEAEVKQLMEAADVDGNGSIDYVEFITATMHRHKL), 457 to 492 (ERDEHLFKAFQYFDKDNSGFITRDELESALIEHEMG), and 497 to 527 (IKDIISEVDTDNDGRINYEEFCAMMRGGGMQ). Ca(2+) is bound by residues D398, D400, S402, T404, E409, D434, D436, N438, S440, E445, D470, D472, S474, E481, D505, D507, D509, R511, and E516.

Belongs to the protein kinase superfamily. Ser/Thr protein kinase family. CDPK subfamily. Expressed in root tips, leaf veins, mesophyll cells, flower reproductive organs and mature pollen grains.

It localises to the membrane. It carries out the reaction L-seryl-[protein] + ATP = O-phospho-L-seryl-[protein] + ADP + H(+). It catalyses the reaction L-threonyl-[protein] + ATP = O-phospho-L-threonyl-[protein] + ADP + H(+). With respect to regulation, activated by calcium. Autophosphorylation may play an important role in the regulation of the kinase activity. Its function is as follows. May play a role in signal transduction pathways that involve calcium as a second messenger. In Oryza sativa subsp. japonica (Rice), this protein is Calcium-dependent protein kinase 19.